Consider the following 2912-residue polypeptide: Fibrillin-2 (2912 aa).

Residues 1–28 form the signal peptide; it reads MGRRRRLCLQLYFLWLGCVVLWAQGTAG. A disordered region spans residues 27 to 52; sequence AGQPQPPPPKPPRPQPPPQQVRSATA. Residues 29 to 77 constitute a propeptide that is removed on maturation; it reads QPQPPPPKPPRPQPPPQQVRSATAGSEGGFLAPEYREEGAAVASRVRRR. Pro residues predominate over residues 30 to 45; that stretch reads PQPPPPKPPRPQPPPQ. EGF-like domains are found at residues 111 to 142, 145 to 176, and 176 to 208; these read IVPI…STCG, SIQQ…TYCG, and GQPV…PQCE. 9 disulfides stabilise this stretch: Cys-115/Cys-124, Cys-119/Cys-130, Cys-132/Cys-141, Cys-149/Cys-159, Cys-153/Cys-164, Cys-166/Cys-175, Cys-180/Cys-190, Cys-184/Cys-196, and Cys-198/Cys-207. The interval 149 to 359 is interaction with MFAP4; sequence CSVRCMNGGT…VTSTDGSRCI (211 aa). The 53-residue stretch at 214 to 266 folds into the TB 1 domain; it reads GPCFTQVNNQMCQGQLTGIVCTKTLCCATIGRAWGHPCEMCPAQPQPCRRGFI. The EGF-like 4; calcium-binding domain occupies 276 to 317; the sequence is DVDECQAIPGICQGGNCINTVGSFECRCPAGHKQSETTQKCE. Cystine bridges form between Cys-280-Cys-292, Cys-287-Cys-301, Cys-303-Cys-316, Cys-322-Cys-334, Cys-329-Cys-343, and Cys-345-Cys-358. Residue Ser-298 is glycosylated (O-linked (Glc) serine). Residues 318–359 enclose the EGF-like 5; calcium-binding domain; the sequence is DIDECSIIPGICETGECSNTVGSYFCVCPRGYVTSTDGSRCI. Ser-340 carries an O-linked (Glc) serine glycan. In terms of domain architecture, TB 2 spans 364–417; that stretch reads GMCFSGLVNGRCAQELPGRMTKMQCCCEPGRCWGIGTIPEACPVRGSEEYRRLC. N-linked (GlcNAc...) asparagine glycosylation occurs at Asn-492. In terms of domain architecture, EGF-like 6 spans 494–534; sequence TIDICKHHANLCLNGRCIPTVSSYRCECNMGYKQDANGDCI. 15 disulfide bridges follow: Cys-498-Cys-510, Cys-505-Cys-519, Cys-521-Cys-533, Cys-539-Cys-549, Cys-544-Cys-558, Cys-560-Cys-573, Cys-579-Cys-591, Cys-586-Cys-600, Cys-602-Cys-615, Cys-621-Cys-632, Cys-627-Cys-641, Cys-643-Cys-656, Cys-662-Cys-673, Cys-668-Cys-682, and Cys-684-Cys-697. Ser-516 is a glycosylation site (O-linked (Glc) serine). The EGF-like 7; calcium-binding domain maps to 535-574; sequence DVDECTSNPCTNGDCVNTPGSYYCKCHAGFQRTPTKQACI. Ser-555 is a glycosylation site (O-linked (Glc) serine). The EGF-like 8; calcium-binding domain maps to 575–616; sequence DIDECIQNGVLCKNGRCVNTDGSFQCICNAGFELTTDGKNCV. O-linked (Glc) serine glycosylation occurs at Ser-597. The EGF-like 9; calcium-binding domain maps to 617–657; that stretch reads DHDECTTTNMCLNGMCINEDGSFKCICKPGFVLAPNGRYCT. Ser-638 carries O-linked (Glc) serine glycosylation. The EGF-like 10; calcium-binding domain maps to 658–698; the sequence is DVDECQTPGICMNGHCINSEGSFRCDCPPGLAVGMDGRVCV. The O-linked (Glc) serine glycan is linked to Ser-679. Residues 704-756 enclose the TB 3 domain; that stretch reads STCYGGIKKGVCVRPFPGAVTKSECCCANPDYGFGEPCQPCPAKNSAEFHGLC. Residues 768-809 enclose the EGF-like 11; calcium-binding domain; that stretch reads DINECALDPDICANGICENLRGSYRCNCNSGYEPDASGRNCI. Disulfide bonds link Cys-772-Cys-784, Cys-779-Cys-793, Cys-795-Cys-808, Cys-814-Cys-826, Cys-821-Cys-835, Cys-837-Cys-850, Cys-856-Cys-866, Cys-861-Cys-875, and Cys-877-Cys-890. The region spanning 810–851 is the EGF-like 12; calcium-binding domain; the sequence is DIDECLVNRLLCDNGLCRNTPGSYSCTCPPGYVFRTETETCE. O-linked (Glc) serine glycosylation occurs at Ser-832. One can recognise an EGF-like 13; calcium-binding domain in the interval 852–891; it reads DINECESNPCVNGACRNNLGSFNCECSPGSKLSSTGLICI. An O-linked (Glc) serine glycan is attached at Ser-872. In terms of domain architecture, TB 4 spans 896 to 947; the sequence is GTCWLNIQDSRCEVNINGATLKSECCATLGAAWGSPCERCELDTACPRGLAR. An EGF-like 14; calcium-binding domain is found at 955–996; it reads DVNECEVFPGVCPNGRCVNSKGSFHCECPEGLTLDGTGRVCL. Disulfide bonds link Cys-959–Cys-971, Cys-966–Cys-980, and Cys-982–Cys-995. O-linked (Glc) serine glycosylation is present at Ser-977. The region spanning 1001 to 1052 is the TB 5 domain; the sequence is EQCYLKWDEDECIHPVPGKFRMDACCCAVGAAWGTECEECPKPGTKEYETLC. Residues 1073–1114 enclose the EGF-like 15; calcium-binding domain; it reads DINECKAFPGMCTYGKCRNTIGSFKCRCNSGFALDMEERNCT. Intrachain disulfides connect Cys-1077–Cys-1089, Cys-1084–Cys-1098, Cys-1100–Cys-1113, Cys-1119–Cys-1131, Cys-1126–Cys-1140, Cys-1142–Cys-1156, Cys-1162–Cys-1174, Cys-1169–Cys-1183, Cys-1185–Cys-1198, Cys-1204–Cys-1216, Cys-1211–Cys-1225, Cys-1227–Cys-1240, Cys-1246–Cys-1257, Cys-1253–Cys-1266, Cys-1268–Cys-1281, Cys-1287–Cys-1299, Cys-1294–Cys-1308, Cys-1310–Cys-1323, Cys-1329–Cys-1341, Cys-1336–Cys-1350, Cys-1352–Cys-1365, Cys-1371–Cys-1384, Cys-1378–Cys-1393, Cys-1395–Cys-1406, Cys-1412–Cys-1425, Cys-1419–Cys-1434, Cys-1436–Cys-1447, Cys-1453–Cys-1465, Cys-1460–Cys-1474, Cys-1476–Cys-1489, Cys-1495–Cys-1506, Cys-1501–Cys-1515, Cys-1517–Cys-1530, Cys-1536–Cys-1547, Cys-1542–Cys-1556, and Cys-1558–Cys-1571. Residue Ser-1095 is glycosylated (O-linked (Glc) serine). The N-linked (GlcNAc...) asparagine glycan is linked to Asn-1112. An EGF-like 16; calcium-binding domain is found at 1115 to 1157; sequence DIDECRISPDLCGSGICVNTPGSFECECFEGYESGFMMMKNCM. The region spanning 1158–1199 is the EGF-like 17; calcium-binding domain; that stretch reads DIDECERNPLLCRGGTCVNTEGSFQCDCPLGHELSPSREDCV. Ser-1180 carries an O-linked (Glc) serine glycan. Residues 1200–1241 enclose the EGF-like 18; calcium-binding domain; sequence DINECSLSDNLCRNGKCVNMIGTYQCSCNPGYQATPDRQGCT. Thr-1222 carries an O-linked (Glc) threonine glycan. The EGF-like 19; calcium-binding domain maps to 1242–1282; sequence DIDECMIMNGGCDTQCTNSEGSYECSCSEGYALMPDGRSCA. Ser-1263 carries O-linked (Glc) serine glycosylation. The EGF-like 20; calcium-binding domain occupies 1283 to 1324; it reads DIDECENNPDICDGGQCTNIPGEYRCLCYDGFMASMDMKTCI. An EGF-like 21; calcium-binding domain is found at 1325-1366; sequence DVNECDLNSNICMFGECENTKGSFICHCQLGYSVKKGTTGCT. Ser-1347 carries O-linked (Glc) serine glycosylation. In terms of domain architecture, EGF-like 22; calcium-binding spans 1367–1407; the sequence is DVDECEIGAHNCDMHASCLNIPGSFKCSCREGWIGNGIKCI. An O-linked (Glc) serine glycan is attached at Ser-1390. The 41-residue stretch at 1408-1448 folds into the EGF-like 23; calcium-binding domain; that stretch reads DLDECSNGTHQCSINAQCVNTPGSYRCACSEGFTGDGFTCS. Asn-1414 carries an N-linked (GlcNAc...) asparagine glycan. The 42-residue stretch at 1449-1490 folds into the EGF-like 24; calcium-binding domain; the sequence is DVDECAENINLCENGQCLNVPGAYRCECEMGFTPASDSRSCQ. The region spanning 1491-1531 is the EGF-like 25; calcium-binding domain; sequence DIDECSFQNICVFGTCNNLPGMFHCICDDGYELDRTGGNCT. A glycan (N-linked (GlcNAc...) asparagine) is linked at Asn-1529. The 41-residue stretch at 1532 to 1572 folds into the EGF-like 26; calcium-binding domain; that stretch reads DIDECADPINCVNGLCVNTPGRYECNCPPDFQLNPTGVGCV. One can recognise a TB 6 domain in the interval 1577–1633; it reads GNCYLKFGPRGDGSLSCNTEIGVGVSRSSCCCSLGKAWGNPCETCPPVNSTEYYTLC. N-linked (GlcNAc...) asparagine glycosylation is present at Asn-1625. Positions 1650–1691 constitute an EGF-like 27; calcium-binding domain; the sequence is DIDECQELPGLCQGGNCINTFGSFQCECPQGYYLSEDTRICE. Cystine bridges form between Cys-1654/Cys-1666, Cys-1661/Cys-1675, Cys-1677/Cys-1690, Cys-1696/Cys-1708, Cys-1703/Cys-1717, and Cys-1719/Cys-1732. Ser-1672 carries an O-linked (Glc) serine glycan. In terms of domain architecture, EGF-like 28; calcium-binding spans 1692 to 1733; that stretch reads DIDECFAHPGVCGPGTCYNTLGNYTCICPPEYMQVNGGHNCM. N-linked (GlcNAc...) asparagine glycosylation is present at Asn-1714. An interaction with MFAP4 region spans residues 1735 to 2171; sequence MRKSFCYRSY…VPSLHDTRED (437 aa). Residues 1738 to 1791 form the TB 7 domain; it reads SFCYRSYNGTTCENELPFNVTKRMCCCTYNVGKAWNKPCEPCPTPGTADFKTIC. N-linked (GlcNAc...) asparagine glycans are attached at residues Asn-1745 and Asn-1756. The region spanning 1808–1849 is the EGF-like 29; calcium-binding domain; sequence DIDECKEIPGICANGVCINQIGSFRCECPTGFSYNDLLLVCE. Intrachain disulfides connect Cys-1812-Cys-1824, Cys-1819-Cys-1833, Cys-1835-Cys-1848, Cys-1854-Cys-1867, Cys-1861-Cys-1876, Cys-1878-Cys-1890, Cys-1896-Cys-1908, Cys-1903-Cys-1917, Cys-1919-Cys-1932, Cys-1938-Cys-1948, Cys-1943-Cys-1957, Cys-1959-Cys-1971, Cys-1977-Cys-1990, Cys-1985-Cys-1999, Cys-2001-Cys-2014, Cys-2020-Cys-2032, Cys-2027-Cys-2041, Cys-2043-Cys-2054, Cys-2060-Cys-2072, Cys-2067-Cys-2081, and Cys-2083-Cys-2096. The 42-residue stretch at 1850-1891 folds into the EGF-like 30; calcium-binding domain; sequence DIDECSNGDNLCQRNADCINSPGSYRCECAAGFKLSPNGACV. The O-linked (Glc) serine glycan is linked to Ser-1873. The EGF-like 31; calcium-binding domain occupies 1892–1933; it reads DRNECLEIPNVCSHGLCVDLQGSYQCICHNGFKASQDQTMCM. Positions 1934 to 1972 constitute an EGF-like 32; calcium-binding domain; the sequence is DVDECERHPCGNGTCKNTVGSYNCLCYPGFELTHNNDCL. Asn-1945 carries an N-linked (GlcNAc...) asparagine glycan. O-linked (Glc) serine glycosylation occurs at Ser-1954. Residues 1973–2015 enclose the EGF-like 33; calcium-binding domain; sequence DIDECSSFFGQVCRNGRCFNEIGSFKCLCNEGYELTPDGKNCI. Ser-1996 is a glycosylation site (O-linked (Glc) serine). The 40-residue stretch at 2016 to 2055 folds into the EGF-like 34; calcium-binding domain; it reads DTNECVALPGSCSPGTCQNLEGSFRCICPPGYEVKSENCI. One can recognise an EGF-like 35; calcium-binding domain in the interval 2056–2097; sequence DINECDEDPNICLFGSCTNTPGGFQCLCPPGFVLSDNGRRCF. One can recognise a TB 8 domain in the interval 2102 to 2155; the sequence is SFCFTNFENGKCSVPKAFNTTKAKCCCSKMPGEGWGDPCELCPKDDEVAFQDLC. N-linked (GlcNAc...) asparagine glycosylation occurs at Asn-2120. In terms of domain architecture, EGF-like 36; calcium-binding spans 2171–2212; sequence DVNECLESPGICSNGQCINTDGSFRCECPMGYNLDYTGVRCV. 15 disulfide bridges follow: Cys-2175/Cys-2187, Cys-2182/Cys-2196, Cys-2198/Cys-2211, Cys-2217/Cys-2228, Cys-2223/Cys-2237, Cys-2239/Cys-2251, Cys-2257/Cys-2268, Cys-2264/Cys-2277, Cys-2279/Cys-2292, Cys-2298/Cys-2312, Cys-2305/Cys-2321, Cys-2323/Cys-2336, Cys-2342/Cys-2354, Cys-2349/Cys-2363, and Cys-2365/Cys-2378. An O-linked (Glc) serine glycan is attached at Ser-2193. The region spanning 2213 to 2252 is the EGF-like 37; calcium-binding domain; that stretch reads DTDECSIGNPCGNGTCTNVIGSFECNCNEGFEPGPMMNCE. N-linked (GlcNAc...) asparagine glycosylation is present at Asn-2225. One can recognise an EGF-like 38; calcium-binding domain in the interval 2253-2293; that stretch reads DINECAQNPLLCAFRCMNTFGSYECTCPIGYALREDQKMCK. Ser-2274 carries O-linked (Glc) serine glycosylation. The EGF-like 39; calcium-binding domain maps to 2294 to 2337; sequence DLDECAEGLHDCESRGMMCKNLIGTFMCICPPGMARRPDGEGCV. The EGF-like 40; calcium-binding domain maps to 2338–2379; the sequence is DENECRTKPGICENGRCVNIIGSYRCECNEGFQSSSSGTECL. A glycan (O-linked (Glc) serine) is linked at Ser-2360. The TB 9 domain occupies 2384-2437; sequence GLCFAEVLQTICQMASSSRNLVTKSECCCDGGRGWGHQCELCPLPGTAQYKKIC. The EGF-like 41; calcium-binding domain maps to 2449–2490; sequence DIDECKVMPNLCTNGQCINTMGSFRCFCKVGYTTDISGTSCI. Disulfide bonds link Cys-2453–Cys-2465, Cys-2460–Cys-2474, Cys-2476–Cys-2489, Cys-2495–Cys-2506, Cys-2502–Cys-2515, Cys-2517–Cys-2530, Cys-2536–Cys-2547, Cys-2543–Cys-2556, Cys-2558–Cys-2569, Cys-2575–Cys-2588, Cys-2582–Cys-2597, Cys-2599–Cys-2612, Cys-2618–Cys-2628, Cys-2624–Cys-2637, Cys-2639–Cys-2652, Cys-2658–Cys-2669, Cys-2664–Cys-2678, Cys-2680–Cys-2693, Cys-2699–Cys-2710, Cys-2706–Cys-2719, and Cys-2721–Cys-2733. Ser-2471 carries an O-linked (Glc) serine glycan. One can recognise an EGF-like 42; calcium-binding domain in the interval 2491-2531; the sequence is DLDECSQSPKPCNYICKNTEGSYQCSCPRGYVLQEDGKTCK. Ser-2512 carries O-linked (Glc) serine glycosylation. The EGF-like 43; calcium-binding domain maps to 2532–2570; that stretch reads DLDECQTKQHNCQFLCVNTLGGFTCKCPPGFTQHHTACI. The 43-residue stretch at 2571-2613 folds into the EGF-like 44; calcium-binding domain; the sequence is DNNECGSQPSLCGAKGICQNTPGSFSCECQRGFSLDATGLNCE. Residue Ser-2594 is glycosylated (O-linked (Glc) serine). The region spanning 2614–2653 is the EGF-like 45; calcium-binding domain; sequence DVDECDGNHRCQHGCQNILGGYRCGCPQGYIQHYQWNQCV. Residues 2654 to 2694 form the EGF-like 46; calcium-binding domain; sequence DENECSNPNACGSASCYNTLGSYKCACPSGFSFDQFSSACH. A glycan (O-linked (Glc) serine) is linked at Ser-2675. Residues 2695–2734 enclose the EGF-like 47; calcium-binding domain; it reads DVNECSSSKNPCNYGCSNTEGGYLCGCPPGYYRVGQGHCV. An N-linked (GlcNAc...) asparagine glycan is attached at Asn-2808.

This sequence belongs to the fibrillin family. As to quaternary structure, interacts with BMP2, BMP4, BMP7, BMP10 and GDF5. Interacts with MFAP2 and MFAP5. Interacts with ADAMTSL5. Interacts with MFAP4. In terms of processing, N-glycosylated. O-glycosylated on serine residues by POGLUT2 and POGLUT3. In terms of tissue distribution, almost exclusively expressed in placenta. Expressed at much lower level in other tissues. Expressed in fetal eye (18 weeks)in the retinal pigment epithelium (RPE), the choroid, Bruch's membrane and in the sclera. Not expressed in the neural retina. As to expression, present at high level in cytotrophoblasts as compared with syncytiotrophoblasts at 8-9 weeks of pregnancy (at protein level). Levels in the serum increase during pregnancy (at protein level).

The protein resides in the secreted. The protein localises to the extracellular space. It is found in the extracellular matrix. Functionally, fibrillins are structural components of 10-12 nm extracellular calcium-binding microfibrils, which occur either in association with elastin or in elastin-free bundles. Fibrillin-2-containing microfibrils regulate the early process of elastic fiber assembly. Regulates osteoblast maturation by controlling TGF-beta bioavailability and calibrating TGF-beta and BMP levels, respectively. In terms of biological role, hormone secreted by trophoblasts that promotes trophoblast invasiveness. Has glucogenic activity: is able to increase plasma glucose levels. This Homo sapiens (Human) protein is Fibrillin-2.